The sequence spans 184 residues: Photosystem I assembly protein Ycf4 (184 aa).

Helical transmembrane passes span 19–39 (ISNFCWAFILFLGSLGFVLVG) and 57–77 (ILFFPQGIVMSFYGIAGLFIS).

This sequence belongs to the Ycf4 family.

The protein resides in the plastid. Its subcellular location is the chloroplast thylakoid membrane. Functionally, seems to be required for the assembly of the photosystem I complex. In Eucalyptus globulus subsp. globulus (Tasmanian blue gum), this protein is Photosystem I assembly protein Ycf4.